The following is a 427-amino-acid chain: Arginine biosynthesis bifunctional protein ArgJ (427 aa).

Substrate is bound by residues Thr174, Lys200, Thr211, Glu291, Asn422, and Thr427. Catalysis depends on Thr211, which acts as the Nucleophile.

The protein belongs to the ArgJ family. As to quaternary structure, heterotetramer of two alpha and two beta chains.

Its subcellular location is the cytoplasm. It catalyses the reaction N(2)-acetyl-L-ornithine + L-glutamate = N-acetyl-L-glutamate + L-ornithine. The catalysed reaction is L-glutamate + acetyl-CoA = N-acetyl-L-glutamate + CoA + H(+). It participates in amino-acid biosynthesis; L-arginine biosynthesis; L-ornithine and N-acetyl-L-glutamate from L-glutamate and N(2)-acetyl-L-ornithine (cyclic): step 1/1. Its pathway is amino-acid biosynthesis; L-arginine biosynthesis; N(2)-acetyl-L-ornithine from L-glutamate: step 1/4. Its function is as follows. Catalyzes two activities which are involved in the cyclic version of arginine biosynthesis: the synthesis of N-acetylglutamate from glutamate and acetyl-CoA as the acetyl donor, and of ornithine by transacetylation between N(2)-acetylornithine and glutamate. This chain is Arginine biosynthesis bifunctional protein ArgJ, found in Prochlorococcus marinus (strain MIT 9313).